The primary structure comprises 432 residues: Alpha-ketoglutarate permease (432 aa).

Residues 1–32 (MAESTVTADSKLTSSDTRRRIWAIVGASSGNL) lie on the Cytoplasmic side of the membrane. The helical transmembrane segment at 33–53 (VEWFDFYVYSFCSLYFAHIFF) threads the bilayer. The Periplasmic portion of the chain corresponds to 54–62 (PSGNTTTQL). A helical transmembrane segment spans residues 63–83 (LQTAGVFAAGFLMRPIGGWLF). The Cytoplasmic portion of the chain corresponds to 84–95 (GRIADKHGRKKS). The chain crosses the membrane as a helical span at residues 96-116 (MLLSVCMMCFGSLVIACLPGY). The Periplasmic segment spans residues 117–118 (ET). Residues 119–139 (IGTWAPALLLLARLFQGLSVG) traverse the membrane as a helical segment. Residues 140–162 (GEYGTSATYMSEVAVEGRKGFYA) are Cytoplasmic-facing. A helical transmembrane segment spans residues 163 to 183 (SFQYVTLIGGQLLALLVVVVL). The Periplasmic segment spans residues 184 to 193 (QHTMEDAALR). Residues 194 to 214 (EWGWRIPFALGAVLAVVALWL) form a helical membrane-spanning segment. Over 215 to 243 (RRQLDETSQQETRALKEAGSLKGLWRNRR) the chain is Cytoplasmic. Residues 244 to 264 (AFIMVLGFTAAGSLCFYTFTT) traverse the membrane as a helical segment. Residues 265-279 (YMQKYLVNTAGMHAN) are Periplasmic-facing. The chain crosses the membrane as a helical span at residues 280–300 (VASGIMTAALFVFMLIQPLIG). Residues 301–309 (ALSDKIGRR) lie on the Cytoplasmic side of the membrane. Residues 310-330 (TSMLCFGSLAAIFTVPILSAL) traverse the membrane as a helical segment. Residues 331–339 (QNVSSPYAA) are Periplasmic-facing. The helical transmembrane segment at 340-360 (FGLVMCALLIVSFYTSISGIL) threads the bilayer. Residues 361–373 (KAEMFPAQVRALG) lie on the Cytoplasmic side of the membrane. Residues 374–394 (VGLSYAVANAIFGGSAEYVAL) form a helical membrane-spanning segment. At 395–402 (SLKSIGME) the chain is on the periplasmic side. The helical transmembrane segment at 403–423 (TAFFWYVTLMAVVAFLVSLML) threads the bilayer. Residues 424-432 (HRKGKGMRL) lie on the Cytoplasmic side of the membrane.

The protein belongs to the major facilitator superfamily. Metabolite:H+ Symporter (MHS) family (TC 2.A.1.6) family.

The protein localises to the cell inner membrane. In terms of biological role, uptake of alpha-ketoglutarate across the boundary membrane with the concomitant import of a cation (symport system). The chain is Alpha-ketoglutarate permease (kgtP) from Escherichia coli (strain K12).